The primary structure comprises 366 residues: tRNA N6-adenosine threonylcarbamoyltransferase (366 aa).

3 residues coordinate a divalent metal cation: His-130, His-134, and Tyr-151. Residues 151-155, Asp-183, Gly-198, Glu-202, and Asn-297 contribute to the substrate site; that span reads YVSGG. Asp-325 is a binding site for a divalent metal cation.

It belongs to the KAE1 / TsaD family. Component of the EKC/KEOPS complex composed of at least BUD32, CGI121, GON7, KAE1 and PCC1; the whole complex dimerizes. A divalent metal cation serves as cofactor.

The protein resides in the cytoplasm. Its subcellular location is the nucleus. It carries out the reaction L-threonylcarbamoyladenylate + adenosine(37) in tRNA = N(6)-L-threonylcarbamoyladenosine(37) in tRNA + AMP + H(+). Component of the EKC/KEOPS complex that is required for the formation of a threonylcarbamoyl group on adenosine at position 37 (t(6)A37) in tRNAs that read codons beginning with adenine. The complex is probably involved in the transfer of the threonylcarbamoyl moiety of threonylcarbamoyl-AMP (TC-AMP) to the N6 group of A37. KAE1 likely plays a direct catalytic role in this reaction, but requires other protein(s) of the complex to fulfill this activity. The EKC/KEOPS complex also promotes both telomere uncapping and telomere elongation. The complex is required for efficient recruitment of transcriptional coactivators. The polypeptide is tRNA N6-adenosine threonylcarbamoyltransferase (Cryptococcus neoformans var. neoformans serotype D (strain JEC21 / ATCC MYA-565) (Filobasidiella neoformans)).